Consider the following 158-residue polypeptide: Protein Smg homolog (158 aa).

Belongs to the Smg family.

In Shewanella sp. (strain MR-4), this protein is Protein Smg homolog.